A 444-amino-acid chain; its full sequence is Phosphoglucosamine mutase (444 aa).

S102 serves as the catalytic Phosphoserine intermediate. Mg(2+)-binding residues include S102, D241, D243, and D245. Residue S102 is modified to Phosphoserine.

This sequence belongs to the phosphohexose mutase family. It depends on Mg(2+) as a cofactor. In terms of processing, activated by phosphorylation.

The enzyme catalyses alpha-D-glucosamine 1-phosphate = D-glucosamine 6-phosphate. Catalyzes the conversion of glucosamine-6-phosphate to glucosamine-1-phosphate. The sequence is that of Phosphoglucosamine mutase from Paracidovorax citrulli (strain AAC00-1) (Acidovorax citrulli).